The sequence spans 259 residues: Deoxyribose-phosphate aldolase (259 aa).

The Proton donor/acceptor role is filled by aspartate 102. Lysine 167 functions as the Schiff-base intermediate with acetaldehyde in the catalytic mechanism. The Proton donor/acceptor role is filled by lysine 201.

It belongs to the DeoC/FbaB aldolase family. DeoC type 2 subfamily.

It is found in the cytoplasm. It catalyses the reaction 2-deoxy-D-ribose 5-phosphate = D-glyceraldehyde 3-phosphate + acetaldehyde. It functions in the pathway carbohydrate degradation; 2-deoxy-D-ribose 1-phosphate degradation; D-glyceraldehyde 3-phosphate and acetaldehyde from 2-deoxy-alpha-D-ribose 1-phosphate: step 2/2. In terms of biological role, catalyzes a reversible aldol reaction between acetaldehyde and D-glyceraldehyde 3-phosphate to generate 2-deoxy-D-ribose 5-phosphate. In Escherichia coli O8 (strain IAI1), this protein is Deoxyribose-phosphate aldolase.